The following is a 188-amino-acid chain: Archaemetzincin (188 aa).

Zn(2+) is bound at residue His-137. The active-site Proton acceptor is Glu-138. His-141, His-147, Cys-148, Cys-153, Cys-172, and Cys-175 together coordinate Zn(2+).

It belongs to the peptidase M54 family. Monomer. Zn(2+) serves as cofactor.

Functionally, probable zinc metalloprotease whose natural substrate is unknown. The chain is Archaemetzincin from Pyrococcus abyssi (strain GE5 / Orsay).